A 950-amino-acid polypeptide reads, in one-letter code: Calcium-transporting ATPase 1 (950 aa).

An N-acetylserine modification is found at Ser2. At 2 to 92 the chain is on the cytoplasmic side; it reads SDNPFNASLL…SLFKKFLSNF (91 aa). The helical transmembrane segment at 93–111 threads the bilayer; the sequence is IEDRMILLLIGSAVVSLFM. Residues 112-116 are Lumenal-facing; sequence GNIDD. The chain crosses the membrane as a helical span at residues 117-133; the sequence is AVSITLAIFIVVTVGFV. Residues 134–288 lie on the Cytoplasmic side of the membrane; the sequence is QEYRSEKSLE…LQLTMDKLGK (155 aa). Ser227 bears the Phosphoserine mark. A helical transmembrane segment spans residues 289-309; sequence DLSLVSFIVIGMICLVGIIQG. The Lumenal portion of the chain corresponds to 310–323; that stretch reads RSWLEMFQISVSLA. The helical transmembrane segment at 324–344 threads the bilayer; sequence VAAIPEGLPIIVTVTLALGVL. Topologically, residues 345 to 814 are cytoplasmic; sequence RMAKRKAIVR…KILTHDVMKR (470 aa). Asp371 functions as the 4-aspartylphosphate intermediate in the catalytic mechanism. Residues 815–835 form a helical membrane-spanning segment; that stretch reads LLTTAACIIVGTVYIFVKEMA. At 836-844 the chain is on the lumenal side; the sequence is EDGKVTARD. The helical transmembrane segment at 845–862 threads the bilayer; sequence TTMTFTCFVFFDMFNALA. The Cytoplasmic portion of the chain corresponds to 863 to 884; sequence CRHNTKSIFEIGFFTNKMFNYA. The helical transmembrane segment at 885 to 905 threads the bilayer; sequence VGLSLLGQMCAIYIPFFQSIF. Residues 906 to 909 are Lumenal-facing; sequence KTEK. The chain crosses the membrane as a helical span at residues 910–930; that stretch reads LGISDILLLLLISSSVFIVDE. The Cytoplasmic portion of the chain corresponds to 931–950; sequence LRKLWTRKKNEEDSTYFSNV.

It belongs to the cation transport ATPase (P-type) (TC 3.A.3) family.

It is found in the golgi apparatus membrane. The catalysed reaction is Ca(2+)(in) + ATP + H2O = Ca(2+)(out) + ADP + phosphate + H(+). In terms of biological role, this magnesium-dependent enzyme catalyzes the hydrolysis of ATP coupled with the transport of calcium. Has a role in the secretory pathway. The chain is Calcium-transporting ATPase 1 (PMR1) from Saccharomyces cerevisiae (strain ATCC 204508 / S288c) (Baker's yeast).